We begin with the raw amino-acid sequence, 124 residues long: Large ribosomal subunit protein eL22z (124 aa).

It belongs to the eukaryotic ribosomal protein eL22 family.

This Arabidopsis thaliana (Mouse-ear cress) protein is Large ribosomal subunit protein eL22z (RPL22B).